Reading from the N-terminus, the 393-residue chain is S-adenosylmethionine synthase 1 (393 aa).

Glu-9 lines the Mg(2+) pocket. His-15 is an ATP binding site. Residue Glu-43 coordinates K(+). Positions 56 and 99 each coordinate L-methionine. ATP contacts are provided by residues 167 to 169, 235 to 238, Asp-246, 252 to 253, Ala-269, Lys-273, and Lys-277; these read DGK, SGRF, and RK. L-methionine is bound at residue Asp-246. Lys-277 is a binding site for L-methionine.

It belongs to the AdoMet synthase family. Homotetramer. Mn(2+) is required as a cofactor. Requires Mg(2+) as cofactor. It depends on Co(2+) as a cofactor. The cofactor is K(+).

It is found in the cytoplasm. It carries out the reaction L-methionine + ATP + H2O = S-adenosyl-L-methionine + phosphate + diphosphate. The protein operates within amino-acid biosynthesis; S-adenosyl-L-methionine biosynthesis; S-adenosyl-L-methionine from L-methionine: step 1/1. Catalyzes the formation of S-adenosylmethionine from methionine and ATP. The reaction comprises two steps that are both catalyzed by the same enzyme: formation of S-adenosylmethionine (AdoMet) and triphosphate, and subsequent hydrolysis of the triphosphate. This Brassica juncea (Indian mustard) protein is S-adenosylmethionine synthase 1 (SAMS1).